The following is an 82-amino-acid chain: Nuclear protein 1 (82 aa).

A disordered region spans residues 1 to 82 (MATFPPATSA…SERKKRGARR (82 aa)). The segment covering 17 to 28 (PEDEDSSLDESD) has biased composition (acidic residues). The short motif at 65 to 82 (KLVTKLQNSERKKRGARR) is the Nuclear localization signal element.

The protein belongs to the NUPR family. In terms of assembly, monomer. Directly interacts with MSL1 and binds MORF4L1, two components of histone acetyltransferase complex; the interaction with MORF4L1 may be mediated by MSL1. Interacts with EP300; this interaction enhances the effect of EP300 on PAX2 transcription factor activity. Interacts with PAXIP1; this interaction prevents PAXIP1 inhibition of PAX2 transcription factor activity. Interacts with COPS5; this interaction allows COPS5-dependent CDKN1B nuclear to cytoplasm translocation. Interacts with RNF2. Interacts with FOXO3; this interaction represses FOXO3 transactivation. Interacts with PTMA; negatively regulates apoptotic process. Interacts with MYOD1, EP300 and DDX5; this interaction coordinates the association of anti-proliferative and pro-myogenic proteins at the myogenin promoter. Interacts with TP53; interaction is stress-dependent. Forms a complex with EP300 and TP53; this complex binds CDKN1A promoter leading to transcriptional induction of CDKN1A. Phosphorylated in vitro by PKA and CK. Phosphorylation promotes DNA-binding activity. In terms of processing, acetylated by EP300 in vitro. In terms of tissue distribution, widely expressed, with high levels in liver, pancreas, prostate, ovary, colon, thyroid, spinal cord, trachea and adrenal gland, moderate levels in heart, placenta, lung, skeletal muscle, kidney, testis, small intestine, stomach and lymph node, and low levels in brain, spleen, thymus and bone marrow. Not detected in peripheral blood leukocytes.

The protein resides in the nucleus. Its subcellular location is the cytoplasm. It is found in the perinuclear region. Functionally, transcription regulator that converts stress signals into a program of gene expression that empowers cells with resistance to the stress induced by a change in their microenvironment. Thereby participates in the regulation of many processes namely cell-cycle, apoptosis, autophagy and DNA repair responses. Controls cell cycle progression and protects cells from genotoxic stress induced by doxorubicin through the complex formation with TP53 and EP300 that binds CDKN1A promoter leading to transcriptional induction of CDKN1A. Protects pancreatic cancer cells from stress-induced cell death by binding the RELB promoter and activating its transcription, leading to IER3 transactivation. Negatively regulates apoptosis through interaction with PTMA. Inhibits autophagy-induced apoptosis in cardiac cells through FOXO3 interaction, inducing cytoplasmic translocation of FOXO3 thereby preventing the FOXO3 association with the pro-autophagic BNIP3 promoter. Inhibits cell growth and facilitates programmed cell death by apoptosis after adriamycin-induced DNA damage through transactivation of TP53. Regulates methamphetamine-induced apoptosis and autophagy through DDIT3-mediated endoplasmic reticulum stress pathway. Participates in DNA repair following gamma-irradiation by facilitating DNA access of the transcription machinery through interaction with MSL1 leading to inhibition of histone H4' Lys-16' acetylation (H4K16ac). Coactivator of PAX2 transcription factor activity, both by recruiting EP300 to increase PAX2 transcription factor activity and by binding PAXIP1 to suppress PAXIP1-induced inhibition on PAX2. Positively regulates cell cycle progression through interaction with COPS5 inducing cytoplasmic translocation of CDKN1B leading to the CDKN1B degradation. Coordinates, through its interaction with EP300, the assiociation of MYOD1, EP300 and DDX5 to the MYOG promoter, leading to inhibition of cell-cycle progression and myogenic differentiation promotion. Negatively regulates beta cell proliferation via inhibition of cell-cycle regulatory genes expression through the suppression of their promoter activities. Also required for LHB expression and ovarian maturation. Exacerbates CNS inflammation and demyelination upon cuprizone treatment. This chain is Nuclear protein 1, found in Homo sapiens (Human).